The primary structure comprises 248 residues: PF03932 family protein CutC (248 aa).

Belongs to the CutC family. In terms of assembly, homodimer.

It is found in the cytoplasm. In Salmonella enteritidis PT4 (strain P125109), this protein is PF03932 family protein CutC.